The sequence spans 361 residues: MKFGWIMSSSSDIEERKDTVKDSLESSIPAIIVKKDEISTVRELGSIEIISDSLDADIVLVTKKDDLDILKSAKDSGKKTCVYITIETKEDEIYATKVSRLDFVDYIILEGKDWTIIPLENIIADLFNEDIKIVSLVNNVNDAKAAYEILEKGVDGVVLVPKDINEVKEFSKLIDSMNFENVALDYAVIKKIEPVGSGDRVCIDTCSIMEIGEGMLIGSYSRGMFLVHSESVENPYVATRPFRVNAGPVHAYILCPENKTKYLSDLKAGDKVLIVNKDGKTRETVIGRIKIEKRPLFLVEAEYNGEILRTILQNAETIRLVSDEGKPISVVDLKEGLKVLIKPDENARHFGMAINESIIEK.

Belongs to the archaeal-type DHQ synthase family.

It carries out the reaction 2-amino-2,3,7-trideoxy-D-lyxo-hept-6-ulosonate + NAD(+) + H2O = 3-dehydroquinate + NH4(+) + NADH + H(+). Functionally, catalyzes the oxidative deamination and cyclization of 2-amino-3,7-dideoxy-D-threo-hept-6-ulosonic acid (ADH) to yield 3-dehydroquinate (DHQ), which is fed into the canonical shikimic pathway of aromatic amino acid biosynthesis. This chain is 3-dehydroquinate synthase, found in Methanococcus vannielii (strain ATCC 35089 / DSM 1224 / JCM 13029 / OCM 148 / SB).